The following is a 322-amino-acid chain: Putative heme-binding peroxidase (322 aa).

H38 acts as the Proton acceptor in catalysis. H162 contributes to the heme b binding site. W178 acts as the Tryptophan radical intermediate in catalysis. A disordered region spans residues I288–L322.

It belongs to the peroxidase family. Cytochrome c peroxidase subfamily. Heme b is required as a cofactor.

Functionally, destroys radicals which are normally produced within the cells and which are toxic to biological systems. The sequence is that of Putative heme-binding peroxidase from Aspergillus fumigatus (strain ATCC MYA-4609 / CBS 101355 / FGSC A1100 / Af293) (Neosartorya fumigata).